Reading from the N-terminus, the 201-residue chain is Acyl-homoserine-lactone synthase (201 aa).

Belongs to the autoinducer synthase family.

The catalysed reaction is a fatty acyl-[ACP] + S-adenosyl-L-methionine = an N-acyl-L-homoserine lactone + S-methyl-5'-thioadenosine + holo-[ACP] + H(+). Required for the synthesis of PAI consisting of 3-oxo-N-(tetrahydro-2-oxo-3-furanyl)-dodecanamide also known as N-(3-oxododecanoyl)homoserine lactone, an autoinducer molecule which binds to LasR and thus acts in elastase biosynthesis regulation. The sequence is that of Acyl-homoserine-lactone synthase (lasI) from Pseudomonas aeruginosa (strain ATCC 15692 / DSM 22644 / CIP 104116 / JCM 14847 / LMG 12228 / 1C / PRS 101 / PAO1).